We begin with the raw amino-acid sequence, 213 residues long: Adenylate kinase (213 aa).

10 to 15 provides a ligand contact to ATP; the sequence is GAGKGT. The interval 30-59 is NMP; it reads STGDMFRAAMANQTEMGVLAKSYIDKGDLV. AMP-binding positions include Thr31, Arg36, 57 to 59, 86 to 89, and Gln93; these read DLV and GYPR. The tract at residues 127–160 is LID; that stretch reads GRIINKKTGETFHKIFNPPVGDYKEEDFYQREDD. Residues Arg128 and 137–138 contribute to the ATP site; that span reads TF. Residues Arg157 and Arg168 each coordinate AMP. Lys196 is an ATP binding site.

The protein belongs to the adenylate kinase family. In terms of assembly, monomer.

Its subcellular location is the cytoplasm. The catalysed reaction is AMP + ATP = 2 ADP. The protein operates within purine metabolism; AMP biosynthesis via salvage pathway; AMP from ADP: step 1/1. Its function is as follows. Catalyzes the reversible transfer of the terminal phosphate group between ATP and AMP. Plays an important role in cellular energy homeostasis and in adenine nucleotide metabolism. The protein is Adenylate kinase of Streptococcus equi subsp. equi (strain 4047).